Consider the following 341-residue polypeptide: Phosphate acyltransferase (341 aa).

The protein belongs to the PlsX family. In terms of assembly, homodimer. Probably interacts with PlsY.

Its subcellular location is the cytoplasm. It catalyses the reaction a fatty acyl-[ACP] + phosphate = an acyl phosphate + holo-[ACP]. It functions in the pathway lipid metabolism; phospholipid metabolism. In terms of biological role, catalyzes the reversible formation of acyl-phosphate (acyl-PO(4)) from acyl-[acyl-carrier-protein] (acyl-ACP). This enzyme utilizes acyl-ACP as fatty acyl donor, but not acyl-CoA. This chain is Phosphate acyltransferase, found in Vibrio parahaemolyticus serotype O3:K6 (strain RIMD 2210633).